Here is a 343-residue protein sequence, read N- to C-terminus: Heat-inducible transcription repressor HrcA (343 aa).

It belongs to the HrcA family.

In terms of biological role, negative regulator of class I heat shock genes (grpE-dnaK-dnaJ and groELS operons). Prevents heat-shock induction of these operons. In Mycolicibacterium gilvum (strain PYR-GCK) (Mycobacterium gilvum (strain PYR-GCK)), this protein is Heat-inducible transcription repressor HrcA.